The sequence spans 211 residues: 2,3-bisphosphoglycerate-dependent phosphoglycerate mutase (211 aa).

Substrate-binding positions include 9–16 (RHGQSDWN), 22–23 (TG), Arg61, 88–91 (ERDY), Lys99, 115–116 (RR), and 159–160 (GN). His10 serves as the catalytic Tele-phosphohistidine intermediate. Catalysis depends on Glu88, which acts as the Proton donor/acceptor.

It belongs to the phosphoglycerate mutase family. BPG-dependent PGAM subfamily. In terms of assembly, homodimer.

It carries out the reaction (2R)-2-phosphoglycerate = (2R)-3-phosphoglycerate. The protein operates within carbohydrate degradation; glycolysis; pyruvate from D-glyceraldehyde 3-phosphate: step 3/5. Catalyzes the interconversion of 2-phosphoglycerate and 3-phosphoglycerate. The protein is 2,3-bisphosphoglycerate-dependent phosphoglycerate mutase of Rhizobium etli (strain CIAT 652).